The following is a 205-amino-acid chain: MPIFFYLFTTLIIISSLCVVLSKNSVYSVLWLIFTFINAAGLMILLGAEFLAMLLIVIYVGAVAVLFLFVIMMLDINFNQAITKLRENLSLSIFITLIMFVDLVITVILSTKNINHSSNISFAIANNISNTKAIGSVLYTDFMLPFQMAGLILFVAMISCITLTLKKRERVKYQDIRKQLSHNKGNVILMTKPILNKGVENIKYE.

5 helical membrane-spanning segments follow: residues 1 to 21 (MPIFFYLFTTLIIISSLCVVL), 26 to 46 (VYSVLWLIFTFINAAGLMILL), 54 to 74 (LLIVIYVGAVAVLFLFVIMML), 89 to 109 (LSLSIFITLIMFVDLVITVIL), and 142 to 162 (FMLPFQMAGLILFVAMISCIT).

Belongs to the complex I subunit 6 family.

It is found in the cell membrane. It catalyses the reaction a quinone + NADH + 5 H(+)(in) = a quinol + NAD(+) + 4 H(+)(out). NDH-1 shuttles electrons from NADH, via FMN and iron-sulfur (Fe-S) centers, to quinones in the respiratory chain. Couples the redox reaction to proton translocation (for every two electrons transferred, four hydrogen ions are translocated across the cytoplasmic membrane), and thus conserves the redox energy in a proton gradient. The sequence is that of NADH-quinone oxidoreductase subunit J (nuoJ) from Rickettsia typhi (strain ATCC VR-144 / Wilmington).